A 274-amino-acid polypeptide reads, in one-letter code: uncharacterized protein (274 aa).

A signal peptide spans 1–17; that stretch reads MKKLLAGFLTLSLALAA. A lipid anchor (N-palmitoyl cysteine) is attached at C18. The S-diacylglycerol cysteine moiety is linked to residue C18. The tract at residues 18 to 169 is disordered; that stretch reads CSNGSDDDSS…DANNGASSAN (152 aa). Residues 25-76 are compositionally biased toward basic and acidic residues; it reads DSSKKDDSSKDNQSSDDKSKDSKNDDKKNNDSDKDKDNNSDSDKNSDSKSDD. A compositionally biased stretch (low complexity) spans 91–169; sequence SDNASGSDSS…DANNGASSAN (79 aa).

The protein localises to the cell membrane. This is an uncharacterized protein from Staphylococcus saprophyticus subsp. saprophyticus (strain ATCC 15305 / DSM 20229 / NCIMB 8711 / NCTC 7292 / S-41).